Here is a 612-residue protein sequence, read N- to C-terminus: Protein MUK1 (612 aa).

Over residues E40–C50 the composition is skewed to basic and acidic residues. The interval E40 to K66 is disordered. The segment covering N55–K66 has biased composition (polar residues). A phosphoserine mark is found at S67, S163, S185, and S245. One can recognise a VPS9 domain in the interval T273–S414. A disordered region spans residues I494–R560. Positions N503–N517 are enriched in low complexity. Positions I518–L529 are enriched in polar residues. Basic and acidic residues predominate over residues S530–S542. The span at R543 to S554 shows a compositional bias: low complexity.

The protein localises to the cytoplasm. Functionally, putative GTPase-activating protein. This chain is Protein MUK1 (MUK1), found in Saccharomyces cerevisiae (strain ATCC 204508 / S288c) (Baker's yeast).